The sequence spans 303 residues: MPGFTCCVPGCYNNSHRDKALHFYTFPKDAELRRLWLKNVSRAGVSGCFSTFQPTTGHRLCSVHFQGGRKTYTVRVPTIFPLRGVNERKVARRPAGAAAARRRQQQQQQQQQQQQQQQQQQPSPSASTAQTTQLQPNLVSASAAVLLTLQAAVDSSQAPGTVPPVPTTPTGEDVKPIDLTVQVEFAAAEGAAAAAAASELEAATAGLEAAECPMGPQLVVVGEEGFPDTGSDHSYSLSSGTTEEELLRKLNEQRDILALMEVKMKEMKGSIRHLRLTEAKLREELREKDRLLAMAVIRKKHGM.

A THAP-type zinc finger spans residues 6–64 (CCVPGCYNNSHRDKALHFYTFPKDAELRRLWLKNVSRAGVSGCFSTFQPTTGHRLCSVH). Disordered stretches follow at residues 85–132 (VNER…AQTT) and 155–174 (SSQA…GEDV). Low complexity predominate over residues 93–132 (RPAGAAAARRRQQQQQQQQQQQQQQQQQQPSPSASTAQTT). An HCFC1-binding motif (HBM) motif is present at residues 232 to 235 (DHSY). Residues 244 to 294 (EELLRKLNEQRDILALMEVKMKEMKGSIRHLRLTEAKLREELREKDRLLAM) adopt a coiled-coil conformation.

It belongs to the THAP11 family. As to quaternary structure, forms homodimers. Interacts via HBM with HCFC1. Forms a complex with HCFC1 and ZNF143.

It is found in the nucleus. Its subcellular location is the cytoplasm. Functionally, transcription factor, which has both transcriptional activation and repression activities. Also modulates chromatin accessibility. In complex with HCFC1 and ZNF143, regulates the expression of several genes, including AP2S1, ESCO2, OPHN1, RBL1, UBXN8 and ZNF32. May regulate the expression of genes that encode both cytoplasmic and mitochondrial ribosomal proteins. Required for normal mitochondrial development and function. Regulates mitochondrial gene expression, including that of components of the electron transport chain. Involved in the maintainance of pluripotency in early embryonic cells, possibly through its action on mitochondrial maturation which is required to meet high energy demands of these cells. Required for early development of retina, preventing premature exit of retinal progenitor cells from the cell cycle. This effect may also be mediated by its action on mitochondria. Through the regulation of MMACHC gene expression, controls cobalamin metabolism. Required for normal brain development and neural precursor differentiation. Involved in cell growth. The protein is THAP domain-containing protein 11 (THAP11) of Bos taurus (Bovine).